A 119-amino-acid polypeptide reads, in one-letter code: MSRRTEKVASLLQQELGAILEKEYPRGGPLLTVVDVKVTADLGLARAYVSIIGSEEQRTAAMEFLRDETKNIRHILSTRIRHQFRRIPELEFFEDRLFEQANRIEELLRSVRKDDGDNA.

It belongs to the RbfA family. As to quaternary structure, monomer. Binds 30S ribosomal subunits, but not 50S ribosomal subunits or 70S ribosomes.

It localises to the cytoplasm. One of several proteins that assist in the late maturation steps of the functional core of the 30S ribosomal subunit. Associates with free 30S ribosomal subunits (but not with 30S subunits that are part of 70S ribosomes or polysomes). Required for efficient processing of 16S rRNA. May interact with the 5'-terminal helix region of 16S rRNA. The chain is Ribosome-binding factor A from Chlorobium luteolum (strain DSM 273 / BCRC 81028 / 2530) (Pelodictyon luteolum).